A 122-amino-acid polypeptide reads, in one-letter code: Large ribosomal subunit protein uL14c (122 aa).

Belongs to the universal ribosomal protein uL14 family. As to quaternary structure, part of the 50S ribosomal subunit.

The protein localises to the plastid. It localises to the chloroplast. Binds to 23S rRNA. The chain is Large ribosomal subunit protein uL14c from Lactuca sativa (Garden lettuce).